A 394-amino-acid chain; its full sequence is Actin-related protein 2-A (394 aa).

ATP-binding positions include 160–162 (GDG), 214–218 (RMIKE), and 305–310 (GGSTMY).

It belongs to the actin family. ARP2 subfamily. Component of the Arp2/3 complex composed of actr2/arp2, actr3/arp3, arpc1 (arpc1a or arpc1b), arpc2, arpc3, arpc4 and arpc5.

It localises to the cytoplasm. The protein localises to the cytoskeleton. It is found in the cell projection. The protein resides in the nucleus. In terms of biological role, ATP-binding component of the Arp2/3 complex, a multiprotein complex that mediates actin polymerization upon stimulation by nucleation-promoting factor (NPF). The Arp2/3 complex mediates the formation of branched actin networks in the cytoplasm, providing the force for cell motility. Seems to contact the pointed end of the daughter actin filament. In addition to its role in the cytoplasmic cytoskeleton, the Arp2/3 complex also promotes actin polymerization in the nucleus, thereby regulating gene transcription and repair of damaged DNA. The Arp2/3 complex promotes homologous recombination (HR) repair in response to DNA damage by promoting nuclear actin polymerization, leading to drive motility of double-strand breaks (DSBs). The protein is Actin-related protein 2-A (actr2-a) of Xenopus laevis (African clawed frog).